The following is a 204-amino-acid chain: Small ribosomal subunit protein uS7 (204 aa).

N-acetylmethionine is present on Met1. Thr2 carries the N-acetylthreonine; in 40S ribosomal protein S5, N-terminally processed modification. A Phosphothreonine modification is found at Thr14. Position 47 is an N6-acetyllysine; alternate (Lys47). Lys47 is covalently cross-linked (Glycyl lysine isopeptide (Lys-Gly) (interchain with G-Cter in SUMO2); alternate). Phosphoserine is present on Ser142.

The protein belongs to the universal ribosomal protein uS7 family. In terms of assembly, component of the small ribosomal subunit. Part of the small subunit (SSU) processome, composed of more than 70 proteins and the RNA chaperone small nucleolar RNA (snoRNA) U3.

The protein resides in the cytoplasm. It localises to the nucleus. Its subcellular location is the nucleolus. Its function is as follows. Component of the small ribosomal subunit. The ribosome is a large ribonucleoprotein complex responsible for the synthesis of proteins in the cell. Part of the small subunit (SSU) processome, first precursor of the small eukaryotic ribosomal subunit. During the assembly of the SSU processome in the nucleolus, many ribosome biogenesis factors, an RNA chaperone and ribosomal proteins associate with the nascent pre-rRNA and work in concert to generate RNA folding, modifications, rearrangements and cleavage as well as targeted degradation of pre-ribosomal RNA by the RNA exosome. This Rattus norvegicus (Rat) protein is Small ribosomal subunit protein uS7 (Rps5).